A 416-amino-acid polypeptide reads, in one-letter code: Alpha-1,3/1,6-mannosyltransferase ALG2 (416 aa).

Over 1-84 (MAEEQGRERD…LPRGLGWGGR (84 aa)) the chain is Cytoplasmic. The segment at residues 85 to 105 (GAAVCAYVRMVFLALYVLFLA) is an intramembrane region (helical). The Cytoplasmic portion of the chain corresponds to 106–416 (DEEFDVVVCD…LYRYVTKLLV (311 aa)).

This sequence belongs to the glycosyltransferase group 1 family. Glycosyltransferase 4 subfamily.

Its subcellular location is the endoplasmic reticulum membrane. It carries out the reaction a beta-D-Man-(1-&gt;4)-beta-D-GlcNAc-(1-&gt;4)-alpha-D-GlcNAc-diphospho-di-trans,poly-cis-dolichol + GDP-alpha-D-mannose = an alpha-D-Man-(1-&gt;3)-beta-D-Man-(1-&gt;4)-beta-D-GlcNAc-(1-&gt;4)-alpha-D-GlcNAc-diphospho-di-trans,poly-cis-dolichol + GDP + H(+). It catalyses the reaction an alpha-D-Man-(1-&gt;3)-beta-D-Man-(1-&gt;4)-beta-D-GlcNAc-(1-&gt;4)-alpha-D-GlcNAc-diphospho-di-trans,poly-cis-dolichol + GDP-alpha-D-mannose = an alpha-D-Man-(1-&gt;3)-[alpha-D-Man-(1-&gt;6)]-beta-D-Man-(1-&gt;4)-beta-D-GlcNAc-(1-&gt;4)-alpha-D-GlcNAc-diphospho-di-trans,poly-cis-dolichol + GDP + H(+). The catalysed reaction is a beta-D-Man-(1-&gt;4)-beta-D-GlcNAc-(1-&gt;4)-alpha-D-GlcNAc-diphospho-di-trans,poly-cis-dolichol + GDP-alpha-D-mannose = an alpha-D-Man-(1-&gt;6)-beta-D-Man-(1-&gt;4)-beta-D-GlcNAc-(1-&gt;4)-alpha-D-GlcNAc-diphospho-di-trans,poly-cis-dolichol + GDP + H(+). The enzyme catalyses an alpha-D-Man-(1-&gt;6)-beta-D-Man-(1-&gt;4)-beta-D-GlcNAc-(1-&gt;4)-alpha-D-GlcNAc-diphospho-di-trans,poly-cis-dolichol + GDP-alpha-D-mannose = an alpha-D-Man-(1-&gt;3)-[alpha-D-Man-(1-&gt;6)]-beta-D-Man-(1-&gt;4)-beta-D-GlcNAc-(1-&gt;4)-alpha-D-GlcNAc-diphospho-di-trans,poly-cis-dolichol + GDP + H(+). Its pathway is protein modification; protein glycosylation. Its function is as follows. Mannosyltransferase that operates in the biosynthetic pathway of dolichol-linked oligosaccharides, the glycan precursors employed in protein asparagine (N)-glycosylation. The assembly of dolichol-linked oligosaccharides begins on the cytosolic side of the endoplasmic reticulum membrane and finishes in its lumen. The sequential addition of sugars to dolichol pyrophosphate produces dolichol-linked oligosaccharides containing fourteen sugars, including two GlcNAcs, nine mannoses and three glucoses. Once assembled, the oligosaccharide is transferred from the lipid to nascent proteins by oligosaccharyltransferases. Catalyzes, on the cytoplasmic face of the endoplasmic reticulum, the addition of the second and third mannose residues to the dolichol-linked oligosaccharide chain, to produce Man3GlcNAc(2)-PP-dolichol core oligosaccharide. Man3GlcNAc(2)-PP-dolichol is a substrate for ALG11, the following enzyme in the biosynthetic pathway. While both alpha 1,3 and alpha 1,6 linkages are possible, the sequential addition of alpha 1,3 followed by alpha 1,6 is probably the preferred route. In Homo sapiens (Human), this protein is Alpha-1,3/1,6-mannosyltransferase ALG2 (ALG2).